The primary structure comprises 88 residues: UPF0250 protein PM1928 (88 aa).

The protein belongs to the UPF0250 family.

The polypeptide is UPF0250 protein PM1928 (Pasteurella multocida (strain Pm70)).